Consider the following 345-residue polypeptide: uncharacterized protein (345 aa).

The span at 1-13 (MSKPNTETISVNI) shows a compositional bias: polar residues. The tract at residues 1 to 23 (MSKPNTETISVNIPESEGVPLPD) is disordered. The stretch at 283 to 316 (SLKQRTNILKKQGETLKKNVEDINKDTSNLKRHA) forms a coiled coil.

Its subcellular location is the virion. This is an uncharacterized protein from Acanthamoeba polyphaga mimivirus (APMV).